The chain runs to 1024 residues: Multidrug resistance protein MdtC (1024 aa).

12 helical membrane-spanning segments follow: residues F3–L23, E333–L353, L360–C380, L387–L407, V431–M451, F463–P483, W528–P548, L853–S873, V875–L895, L897–V917, P953–G973, and I984–V1004.

The protein belongs to the resistance-nodulation-cell division (RND) (TC 2.A.6) family. MdtC subfamily. Part of a tripartite efflux system composed of MdtA, MdtB and MdtC. MdtC forms a heteromultimer with MdtB.

It is found in the cell inner membrane. The polypeptide is Multidrug resistance protein MdtC (Erwinia amylovora (strain ATCC 49946 / CCPPB 0273 / Ea273 / 27-3)).